The sequence spans 543 residues: Zinc finger protein 34 (543 aa).

One can recognise a KRAB domain in the interval 14-87; it reads VTFEDVAVFL…DMHGAEQPSV (74 aa). A disordered region spans residues 84–151; the sequence is QPSVDGSAHG…PGEQRGPRLV (68 aa). Residues 124-147 are compositionally biased toward basic and acidic residues; it reads EPGEVHERVREPEGRLDRPGEQRG. 12 C2H2-type zinc fingers span residues 179–201, 234–256, 262–284, 290–312, 318–340, 346–368, 374–396, 402–424, 430–452, 458–480, 486–508, and 514–536; these read HKCDICEQSFEQRSYLNNHKRVH, YYCGCCGKAFRYSANLVKHQRLH, YKCEECGKAFHQSCELISHRRMH, YRCDECGKTFNQRPNLMKHQRIH, YKCSECGKHFSAYSSLIYHQRIH, YKCSDCGKAFSDGSILIRHRRTH, YECKECGKGFTQSSNLIQHQRIH, YKCNECEKAFIQKTKLVEHQRSH, YECNDCGKVFSQSTHLIQHQRIH, YKCSECGKAFHNSSRLIHHQRSH, YKCADCKKAFSQGTYLLQHRRIH, and YTCGECGKAFRHSSNMSQHQRIH.

Belongs to the krueppel C2H2-type zinc-finger protein family.

The protein localises to the nucleus. Its function is as follows. May be involved in transcriptional regulation. The protein is Zinc finger protein 34 (ZNF34) of Bos taurus (Bovine).